Consider the following 589-residue polypeptide: Splicing factor U2af large subunit B (589 aa).

The segment at 1-195 is disordered; that stretch reads MMSYEGNGDG…KRRSGFDMAP (195 aa). Over residues 14–27 the composition is skewed to polar residues; that stretch reads STENHNENYISLES. 2 stretches are compositionally biased toward basic and acidic residues: residues 29 to 100 and 109 to 145; these read PFHE…DRQR and RDRS…DREV. Composition is skewed to basic residues over residues 146–156 and 164–188; these read RHRRRSRSRSR and RSEH…SKRR. 3 RRM domains span residues 255–338, 375–453, and 494–580; these read RRVY…RPTD, DRIF…RAIQ, and QVVT…YPED.

The protein belongs to the splicing factor SR family. Component of the spliceosome. Interacts with SF1 in the nucleus.

Its subcellular location is the nucleus. The protein localises to the nucleus speckle. Functionally, necessary for the splicing of pre-mRNA. The polypeptide is Splicing factor U2af large subunit B (Arabidopsis thaliana (Mouse-ear cress)).